Consider the following 53-residue polypeptide: Ferredoxin B (53 aa).

The N-terminal extension stretch occupies residues 1–35; the sequence is GIDPNYRSLPVVKEEQGVKIYGTYEPPTKLGIWGT. Lys29 is subject to N6-methyllysine. In terms of domain architecture, 4Fe-4S ferredoxin-type 1 spans 34–53; the sequence is GTIVGVDFDLCIADGSCINA. Positions 44 and 50 each coordinate [3Fe-4S] cluster.

Requires [3Fe-4S] cluster as cofactor. The cofactor is [4Fe-4S] cluster.

Ferredoxins are iron-sulfur proteins that transfer electrons in a wide variety of metabolic reactions. This chain is Ferredoxin B, found in Sulfuracidifex metallicus (Sulfolobus metallicus).